We begin with the raw amino-acid sequence, 287 residues long: ATP synthase gamma chain (287 aa).

This sequence belongs to the ATPase gamma chain family. F-type ATPases have 2 components, CF(1) - the catalytic core - and CF(0) - the membrane proton channel. CF(1) has five subunits: alpha(3), beta(3), gamma(1), delta(1), epsilon(1). CF(0) has three main subunits: a, b and c.

The protein localises to the cell inner membrane. Functionally, produces ATP from ADP in the presence of a proton gradient across the membrane. The gamma chain is believed to be important in regulating ATPase activity and the flow of protons through the CF(0) complex. This Ectopseudomonas mendocina (strain ymp) (Pseudomonas mendocina) protein is ATP synthase gamma chain.